A 107-amino-acid chain; its full sequence is SH3 domain-binding glutamic acid-rich-like protein 2 (107 aa).

Residues 61-67 (QGNPLPP) carry the SH3-binding motif.

This sequence belongs to the SH3BGR family.

Its subcellular location is the nucleus. In Pongo abelii (Sumatran orangutan), this protein is SH3 domain-binding glutamic acid-rich-like protein 2 (SH3BGRL2).